Consider the following 141-residue polypeptide: Nucleoside diphosphate kinase (141 aa).

6 residues coordinate ATP: Lys-11, Phe-59, Arg-87, Thr-93, Arg-104, and Asn-114. His-117 serves as the catalytic Pros-phosphohistidine intermediate.

It belongs to the NDK family. Homotetramer. Mg(2+) is required as a cofactor.

It localises to the cytoplasm. It carries out the reaction a 2'-deoxyribonucleoside 5'-diphosphate + ATP = a 2'-deoxyribonucleoside 5'-triphosphate + ADP. The enzyme catalyses a ribonucleoside 5'-diphosphate + ATP = a ribonucleoside 5'-triphosphate + ADP. Functionally, major role in the synthesis of nucleoside triphosphates other than ATP. The ATP gamma phosphate is transferred to the NDP beta phosphate via a ping-pong mechanism, using a phosphorylated active-site intermediate. This chain is Nucleoside diphosphate kinase, found in Variovorax paradoxus (strain S110).